Consider the following 108-residue polypeptide: DNA-binding protein HBbu (108 aa).

It belongs to the bacterial histone-like protein family.

Its function is as follows. Histone-like DNA-binding protein which is capable of wrapping DNA to stabilize it, and thus to prevent its denaturation under extreme environmental conditions. The sequence is that of DNA-binding protein HBbu (hbb) from Borreliella afzelii (Borrelia afzelii).